Consider the following 1197-residue polypeptide: Envelopment polyprotein (1197 aa).

The N-terminal stretch at Met-1–Ala-16 is a signal peptide. Residues Ile-17–Thr-130 lie on the Cytoplasmic side of the membrane. The interval Met-131–Ala-153 is internal signal sequence for glycoprotein N. At Glu-154–Ala-582 the chain is on the lumenal side. 12 disulfides stabilise this stretch: Cys-179/Cys-188, Cys-229/Cys-239, Cys-250/Cys-281, Cys-271/Cys-284, Cys-304/Cys-456, Cys-322/Cys-332, Cys-374/Cys-434, Cys-402/Cys-413, Cys-420/Cys-425, Cys-479/Cys-482, Cys-486/Cys-556, and Cys-506/Cys-511. Residues Leu-583–Leu-603 form a helical membrane-spanning segment. Residues Tyr-604–Pro-673 are Cytoplasmic-facing. A golgi retention signal region spans residues Lys-608–Ile-650. Residues Val-646–Ile-650 are important for correct targeting of the glycoproteins to the Golgi complex but not for heterodimerization. The internal signal sequence for glycoprotein C stretch occupies residues Tyr-675–Ala-690. Intrachain disulfides connect Cys-691/Cys-731, Cys-704/Cys-713, Cys-756/Cys-852, Cys-771/Cys-965, Cys-777/Cys-825, Cys-783/Cys-832, Cys-788/Cys-814, Cys-818/Cys-823, Cys-934/Cys-947, Cys-1029/Cys-1101, Cys-1039/Cys-1042, and Cys-1049/Cys-1083. Topologically, residues Cys-691–Thr-1159 are lumenal. The tract at residues Cys-777–Cys-783 is fusion loop. N-linked (GlcNAc...) asparagine; by host glycosylation is present at Asn-794. The fusion loop stretch occupies residues Gly-819 to Pro-830. N-linked (GlcNAc...) asparagine; by host glycosylation is present at Asn-1035. Asn-1077 carries an N-linked (GlcNAc...) asparagine; by host glycan. The helical transmembrane segment at Ile-1160–Leu-1180 threads the bilayer. Topologically, residues Gly-1181 to Ser-1197 are cytoplasmic.

It belongs to the phlebovirus envelope glycoprotein family. Heterodimer with glycoprotein C. Homotrimer (postfusion). Interacts with nucleocapsid protein N and with the polymerase L in order to package them into virus particles. Interacts with host E3 ubiquitin-protein ligase UBR4; this interaction is important for viral RNA production. Interacts with host LRP1; this interaction facilitates virus entry into the host cell. In terms of assembly, heterodimer with glycoprotein C. Specific enzymatic cleavages in vivo yield mature proteins including NSm protein, Glycoprotein C, and Glycoprotein N. Post-translationally, glycosylated. The glycans can attach to host CD209/DC-SIGN, and may play a role in virus entry into dendritic cells. In terms of processing, palmitoylated.

It is found in the virion membrane. The protein localises to the host Golgi apparatus membrane. The protein resides in the host endoplasmic reticulum membrane. It localises to the host mitochondrion outer membrane. Its subcellular location is the host Golgi apparatus. It is found in the virion. Its function is as follows. Structural component of the virion that interacts with glycoprotein C. It shields the hydrophobic fusion loops of the glycoprotein C, preventing premature fusion. The glycoprotein protrusions are arranged on an icosahedral lattice, with T=12 triangulation. They are able to attach the virion to the host cell receptor CD209/DC-SIGN and to promote fusion of membranes with the late endosome after endocytosis of the virion. Plays a role in the packaging of ribonucleoproteins and polymerase during virus assembly. In terms of biological role, structural component of the virion that interacts with glycoprotein N. Acts as a class II fusion protein that is activated upon acidification and subsequent repositioning of the glycoprotein N. The glycoprotein protrusions are arranged on an icosahedral lattice, with T=12 triangulation. They are able to attach the virion to the host cell receptor CD209/DC-SIGN and to promote fusion of membranes with the late endosome after endocytosis of the virion. Plays a role in the inhibition of virus-induced apoptosis. Plays a role for virus dissemination in vertebrates. Functionally, plays a role for virus dissemination in mosquitoes. May act as a structural virion protein in insects. This chain is Envelopment polyprotein (GP), found in Rift valley fever virus (strain ZH-548 M12) (RVFV).